Reading from the N-terminus, the 441-residue chain is Keratin, type I cytoskeletal 17 (441 aa).

Positions 1 to 23 are disordered; that stretch reads MTTTIRHFSSGSIKGSSGLAGGS. A head region spans residues 1–91; the sequence is MTTTIRHFSS…GGVDGLLVGG (91 aa). The span at 9–23 shows a compositional bias: low complexity; the sequence is SSGSIKGSSGLAGGS. Position 12 is a phosphoserine (Ser12). Lys14 is covalently cross-linked (Glycyl lysine isopeptide (Lys-Gly) (interchain with G-Cter in SUMO1); alternate). Lys14 is covalently cross-linked (Glycyl lysine isopeptide (Lys-Gly) (interchain with G-Cter in SUMO2); alternate). 4 positions are modified to phosphoserine: Ser24, Ser30, Ser32, and Ser37. Phosphoserine; by RPS6KA1 is present on Ser42. Residues 92–128 are coil 1A; sequence EKATMQNLNDRLASYLDKVRALEEANTELELKIRDWY. The 312-residue stretch at 92 to 403 folds into the IF rod domain; it reads EKATMQNLND…RLLEGEDAHL (312 aa). Residue Thr118 is modified to Phosphothreonine. Residues 129 to 146 are linker 1; the sequence is QKQAPGPAPDYSSYFKTI. The tract at residues 147–238 is coil 1B; the sequence is EDLRNKIHTA…NHEEEMKALR (92 aa). A linker 12 region spans residues 239-258; the sequence is GQVGGEINVEMDAAPGVDLS. The interval 259–400 is coil 2; sequence RILNEMRDQY…TYRRLLEGED (142 aa). Residue Lys286 forms a Glycyl lysine isopeptide (Lys-Gly) (interchain with G-Cter in SUMO2) linkage. At Thr287 the chain carries Phosphothreonine. Ser331 is modified (phosphoserine). The tract at residues 401-441 is tail; that stretch reads AHLTQYKTKEPVTTRQVRTIVEEVQDGRVISSREQVHQTSH. Residues Lys407 and Lys409 each participate in a glycyl lysine isopeptide (Lys-Gly) (interchain with G-Cter in SUMO1); alternate cross-link. Glycyl lysine isopeptide (Lys-Gly) (interchain with G-Cter in SUMO2); alternate cross-links involve residues Lys407 and Lys409.

This sequence belongs to the intermediate filament family. Heterodimer of a type I and a type II keratin. KRT17 associates with KRT6 isomers (KRT6A or KRT6B). Interacts with TRADD and SFN. Post-translationally, phosphorylation at Ser-42 occurs in a growth- and stress-dependent fashion in skin keratinocytes, it has no effect on filament organization.

Its subcellular location is the cytoplasm. Type I keratin involved in the formation and maintenance of various skin appendages, specifically in determining shape and orientation of hair. Required for the correct growth of hair follicles, in particular for the persistence of the anagen (growth) state. Modulates the function of TNF-alpha in the specific context of hair cycling. Regulates protein synthesis and epithelial cell growth through binding to the adapter protein SFN and by stimulating Akt/mTOR pathway. Involved in tissue repair. May be a marker of basal cell differentiation in complex epithelia and therefore indicative of a certain type of epithelial 'stem cells'. Acts as a promoter of epithelial proliferation by acting a regulator of immune response in skin: promotes Th1/Th17-dominated immune environment contributing to the development of basaloid skin tumors. May act as an autoantigen in the immunopathogenesis of psoriasis, with certain peptide regions being a major target for autoreactive T-cells and hence causing their proliferation. The sequence is that of Keratin, type I cytoskeletal 17 from Bos taurus (Bovine).